A 428-amino-acid chain; its full sequence is Dihydroorotase (428 aa).

Zn(2+) is bound by residues H59 and H61. Substrate-binding positions include 61–63 (HLR) and N93. D151, H178, and H231 together coordinate Zn(2+). Position 277 (N277) interacts with substrate. D304 contributes to the Zn(2+) binding site. D304 is an active-site residue. Substrate is bound by residues H308 and 322 to 323 (FG).

Belongs to the metallo-dependent hydrolases superfamily. DHOase family. Class I DHOase subfamily. Zn(2+) serves as cofactor.

The catalysed reaction is (S)-dihydroorotate + H2O = N-carbamoyl-L-aspartate + H(+). The protein operates within pyrimidine metabolism; UMP biosynthesis via de novo pathway; (S)-dihydroorotate from bicarbonate: step 3/3. Functionally, catalyzes the reversible cyclization of carbamoyl aspartate to dihydroorotate. The polypeptide is Dihydroorotase (Bacillus cereus (strain B4264)).